Consider the following 929-residue polypeptide: Diacylglycerol kinase zeta (929 aa).

Basic and acidic residues predominate over residues M1–D14. 2 disordered regions span residues M1–P46 and K59–E80. The span at S15 to G24 shows a compositional bias: low complexity. Basic and acidic residues predominate over residues S25–P37. 2 Phorbol-ester/DAG-type zinc fingers span residues H98–C153 and H173–C231. The interval K257–W281 is disordered. Residues A258 to K273 are compositionally biased toward basic residues. The interval G279–L417 is mediates interaction with RASGRP1. The region spanning P292–P426 is the DAGKc domain. The short motif at L362–L370 is the Nuclear export signal element. The segment at D421 to D441 is disordered. Phosphoserine is present on S706. Residues A760–L783 are disordered. The segment covering L764 to P778 has biased composition (pro residues). S782 carries the phosphoserine modification. ANK repeat units follow at residues Q823–D853 and N858–K887. A PDZ-binding motif is present at residues Q925 to V929.

The protein belongs to the eukaryotic diacylglycerol kinase family. Interacts (via PDZ-binding motif) with the PDZ domain of the syntrophin SNTG1 and that of SNX27. Interacts with IRS1 in the absence of insulin; insulin stimulation decreases this interaction. Found in a ternary complex with IRS1 and PIP5K1A in the absence of insulin. Interacts with PIP5K1A. Forms a signaling complex with RASGRP1 and HRAS.

It is found in the nucleus. It localises to the cytoplasm. Its subcellular location is the cytosol. The protein localises to the cell membrane. The protein resides in the cell projection. It is found in the lamellipodium. The catalysed reaction is a 1,2-diacyl-sn-glycerol + ATP = a 1,2-diacyl-sn-glycero-3-phosphate + ADP + H(+). It carries out the reaction a 1-O-alkyl-sn-glycerol + ATP = a 1-O-alkyl-sn-glycero-3-phosphate + ADP + H(+). It catalyses the reaction 1-O-alkyl-2-acyl-sn-glycerol + ATP = 1-O-alkyl-2-acyl-sn-glycero-3-phosphate + ADP + H(+). The enzyme catalyses 1,2-didecanoyl-sn-glycerol + ATP = 1,2-didecanoyl-sn-glycero-3-phosphate + ADP + H(+). The catalysed reaction is 1,2-ditetradecanoyl-sn-glycerol + ATP = 1,2-ditetradecanoyl-sn-glycero-3-phosphate + ADP + H(+). It carries out the reaction 1-hexadecanoyl-2-(9Z-octadecenoyl)-sn-glycerol + ATP = 1-hexadecanoyl-2-(9Z-octadecenoyl)-sn-glycero-3-phosphate + ADP + H(+). It catalyses the reaction 1-hexadecanoyl-2-(5Z,8Z,11Z,14Z-eicosatetraenoyl)-sn-glycerol + ATP = 1-hexadecanoyl-2-(5Z,8Z,11Z,14Z-eicosatetraenoyl)-sn-glycero-3-phosphate + ADP + H(+). The enzyme catalyses 1-octadecanoyl-2-(9Z-octadecenoyl)-sn-glycerol + ATP = 1-octadecanoyl-2-(9Z-octadecenoyl)-sn-glycero-3-phosphate + ADP + H(+). The catalysed reaction is 1-octadecanoyl-2-(5Z,8Z,11Z,14Z-eicosatetraenoyl)-sn-glycerol + ATP = 1-octadecanoyl-2-(5Z,8Z,11Z,14Z-eicosatetraenoyl)-sn-glycero-3-phosphate + ADP + H(+). It carries out the reaction 1-octadecanoyl-2-(4Z,7Z,10Z,13Z,16Z,19Z-docosahexaenoyl)-sn-glycerol + ATP = 1-octadecanoyl-2-(4Z,7Z,10Z,13Z,16Z,19Z-docosahexaenoyl)-sn-glycero-3-phosphate + ADP + H(+). It catalyses the reaction 1,2-di-(9Z-octadecenoyl)-sn-glycerol + ATP = 1,2-di-(9Z-octadecenoyl)-sn-glycero-3-phosphate + ADP + H(+). The enzyme catalyses 1-(9Z-octadecenoyl)-2-hexadecanoyl-sn-glycerol + ATP = 1-(9Z)-octadecenoyl-2-hexadecanoyl-sn-glycero-3-phosphate + ADP + H(+). The catalysed reaction is 1-eicosanoyl-2-(5Z,8Z,11Z,14Z)-eicosatetraenoyl-sn-glycerol + ATP = 1-eicosanoyl-2-(5Z,8Z,11Z,14Z)-eicosatetraenoyl-sn-glycero-3-phosphate + ADP + H(+). It carries out the reaction 1,2-di-(5Z,8Z,11Z,14Z)-eicosatetraenoyl-sn-glycerol + ATP = 1,2-di-(5Z,8Z,11Z,14Z)-eicosatetraenoyl-sn-glycero-3-phosphate + ADP + H(+). It catalyses the reaction 1-O-hexadecyl-2-acetyl-sn-glycerol + ATP = 1-O-hexadecyl-2-acetyl-sn-glycero-3-phosphate + ADP + H(+). The enzyme catalyses 1-O-hexadecyl-2-(5Z,8Z,11Z,14Z-eicosatetraenoyl)-sn-glycerol + ATP = 1-O-hexadecyl-2-(5Z,8Z,11Z,14Z-eicosatetraenoyl)-sn-glycero-3-phosphate + ADP + H(+). The catalysed reaction is 1-O-hexadecyl-2-(9Z-octadecenoyl)-sn-glycerol + ATP = 1-O-hexadecyl-2-(9Z-octadecenoyl)-sn-glycero-3-phosphate + ADP + H(+). It carries out the reaction 1-O-hexadecyl-sn-glycerol + ATP = 1-O-hexadecyl-sn-glycero-3-phosphate + ADP + H(+). The protein operates within lipid metabolism; glycerolipid metabolism. Its function is as follows. Diacylglycerol kinase that converts diacylglycerol/DAG into phosphatidic acid/phosphatidate/PA and regulates the respective levels of these two bioactive lipids. Thereby, acts as a central switch between the signaling pathways activated by these second messengers with different cellular targets and opposite effects in numerous biological processes. Also plays an important role in the biosynthesis of complex lipids. Does not exhibit an acyl chain-dependent substrate specificity among diacylglycerol species. Can also phosphorylate 1-alkyl-2-acylglycerol in vitro but less efficiently and with a preference for alkylacylglycerols containing an arachidonoyl group. The biological processes it is involved in include T cell activation since it negatively regulates T-cell receptor signaling which is in part mediated by diacylglycerol. By generating phosphatidic acid, stimulates PIP5KIA activity which regulates actin polymerization. Through the same mechanism could also positively regulate insulin-induced translocation of SLC2A4 to the cell membrane. Regulates RASGRP1 activity. This chain is Diacylglycerol kinase zeta, found in Rattus norvegicus (Rat).